The chain runs to 209 residues: MKELTKRQNEVLDVIKDQILKTGMPPTRVELAKILGFRSANAAEEHLKALARKGAIEILAGTSRGIRLLGEHQHNEKAHQDGLPLIGQVAAGEPILAQQHIETYYDVDPALFHPSADFLLRVQGESMKDIGIMDGDLLAVHKTQDIKNGQVVIARVEDDVTVKRFYREGRQVILKAENNDFGPIKIDLAYQSFDIEGIAVGVIRTADWM.

The segment at residues 28-48 is a DNA-binding region (H-T-H motif); that stretch reads RVELAKILGFRSANAAEEHLK. Catalysis depends on for autocatalytic cleavage activity residues Ser-126 and Lys-163.

It belongs to the peptidase S24 family. In terms of assembly, homodimer.

It catalyses the reaction Hydrolysis of Ala-|-Gly bond in repressor LexA.. Represses a number of genes involved in the response to DNA damage (SOS response), including recA and lexA. In the presence of single-stranded DNA, RecA interacts with LexA causing an autocatalytic cleavage which disrupts the DNA-binding part of LexA, leading to derepression of the SOS regulon and eventually DNA repair. The protein is LexA repressor of Psychromonas ingrahamii (strain DSM 17664 / CCUG 51855 / 37).